The chain runs to 538 residues: Adenine deaminase (538 aa).

Belongs to the metallo-dependent hydrolases superfamily. Adenine deaminase family. Requires Mn(2+) as cofactor.

It carries out the reaction adenine + H2O + H(+) = hypoxanthine + NH4(+). This Methanothermobacter thermautotrophicus (strain ATCC 29096 / DSM 1053 / JCM 10044 / NBRC 100330 / Delta H) (Methanobacterium thermoautotrophicum) protein is Adenine deaminase.